The sequence spans 782 residues: Cadherin-5 (782 aa).

A signal peptide spans 1 to 22 (MQVLVMLLAAAGTYLGLLTAPT). Positions 23–44 (AASNPGRQDTPSTLPLHRRQKR) are excised as a propeptide. Cadherin domains follow at residues 45–148 (DWIW…WPVF), 149–255 (TQLV…FPVF), 256–370 (TQTR…PPNF), 371–475 (KQPF…DNAP), and 476–592 (EFAK…MGAQ). Residues 45–598 (DWIWNQMHID…MGAQVGVSIQ (554 aa)) are Extracellular-facing. The Ca(2+) site is built by E55 and E56. N58 carries N-linked (GlcNAc...) asparagine glycosylation. Residues D106, E108, D140, I141, N142, D143, and N144 each contribute to the Ca(2+) site. N154 carries an N-linked (GlcNAc...) asparagine glycan. Residues D174, D176, H183, and D228 each coordinate Ca(2+). N360, N440, N522, and N534 each carry an N-linked (GlcNAc...) asparagine glycan. Residues 599–619 (ALVAIFLCILTIAVISLLVYL) form a helical membrane-spanning segment. The interval 620 to 659 (RRRLRKQARAHGKSVPEIHEQLVTYDEEGGGEMDTTSYDV) is required for interaction with PALS1. At 620–782 (RRRLRKQARA…GSDPREELLY (163 aa)) the chain is on the cytoplasmic side.

As to quaternary structure, part of a complex composed of AMOTL2, MAGI1 and CDH5, within the complex AMOTL2 acts as a scaffold protein for the interaction of MAGI1 with CDH5. The complex is required for coupling actin fibers to cell junctions in endothelial cells. Within the complex AMOTL2 (via its N-terminus) interacts with CDH5. Interacts (via cadherin 5 domain) with PTPRB. Interacts with TRPC4. Interacts with KRIT1. Interacts with PARD3. Interacts with RTN4 (isoform B). Interacts with PALS1; the interaction promotes PALS1 localization to cell junctions and is required for CDH5-mediated vascular lumen formation and endothelial cell. Interacts with CTNND1/p120-catenin; the interaction controls CADH5 endocytosis. Phosphorylated on tyrosine residues by KDR/VEGFR-2. Dephosphorylated by PTPRB. Post-translationally, O-glycosylated.

It localises to the cell junction. The protein localises to the adherens junction. The protein resides in the cell membrane. It is found in the cytoplasm. Its function is as follows. Cadherins are calcium-dependent cell adhesion proteins. They preferentially interact with themselves in a homophilic manner in connecting cells; cadherins may thus contribute to the sorting of heterogeneous cell types. This cadherin may play a important role in endothelial cell biology through control of the cohesion and organization of the intercellular junctions. It associates with alpha-catenin forming a link to the cytoskeleton. Plays a role in coupling actin fibers to cell junctions in endothelial cells, via acting as a cell junctional complex anchor for AMOTL2 and MAGI1. Acts in concert with KRIT1 and PALS1 to establish and maintain correct endothelial cell polarity and vascular lumen. These effects are mediated by recruitment and activation of the Par polarity complex and RAP1B. Required for activation of PRKCZ and for localization of phosphorylated PRKCZ, PARD3, TIAM1 and RAP1B to the cell junction. Associates with CTNND1/p120-catenin to control CADH5 endocytosis. The polypeptide is Cadherin-5 (Sus scrofa (Pig)).